Reading from the N-terminus, the 2472-residue chain is MDPSGVKVLETAEDIQERRQQVLDRYHRFKELSTLRRQKLEDSYRFQFFQRDAEELEKWIQEKLQVASDENYKDPTNLQGKLQKHQAFEAEVQANSGAIVKLDETGNLMISEGHFASETIRTRLMELHRQWELLLEKMREKGIKLLQAQKLVQYLRECEDVMDWINDKEAIVTSEELGQDLEHVEVLQKKFEEFQTDLAAHEERVNEVNQFAAKLIQEQHPEEELIKTKQEEVNAAWQRLKGLALQRQGKLFGAAEVQRFNRDVDETIGWIKEKEQLMASDDFGRDLASVQALLRKHEGLERDLAALEDKVKALCAEADRLQQSHPLSANQIQVKREELITNWEQIRTLAAERHARLDDSYRLQRFLADFRDLTSWVTEMKALINADELANDVAGAEALLDRHQEHKGEIDAHEDSFKSADESGQALLAAGHYASDEVREKLSILSEERAALLELWELRRQQYEQCMDLQLFYRDTEQVDNWMSKQEAFLLNEDLGDSLDSVEALLKKHEDFEKSLSAQEEKITALDEFATKLIQNNHYAMEDVATRRDALLSRRNALHERAMHRRAQLADSFHLQQFFRDSDELKSWVNEKMKTATDEAYKDPSNLQGKVQKHQAFEAELSANQSRIDALEKAGQKLIDVNHYAKEEVAARMNEVISLWKKLLEATELKGVKLREANQQQQFNRNVEDIELWLYEVEGHLASDDYGKDLTNVQNLQKKHALLEADVAAHQDRIDGITIQARQFQDAGHFDAENIKKKQEALVARYEALKEPMVARKQKLADSLRLQQLFRDVEDEETWIREKEPIAASTNRGKDLIGVQNLLKKHQALQAEIAGHEPRIKAVTQKGNAMVEEGHFAAEDVKAKLSELNQKWEALKAKASQRRQDLEDSLQAQQYFADANEAESWMREKEPIVGSTDYGKDEDSAEALLKKHEALMSDLSAYGSSIQALREQAQSCRQQVAPMDDETGKELVLALYDYQEKSPREVTMKKGDILTLLNSTNKDWWKVEVNDRQGFVPAAYVKKLDPAQSASRENLLEEQGSIALRQGQIDNQTRITKEAGSVSLRMKQVEELYQSLLELGEKRKGMLEKSCKKFMLFREANELQQWINEKEAALTSEEVGADLEQVEVLQKKFDDFQKDLKANESRLKDINKVAEDLESEGLMAEEVQAVQQQEVYGMMPRDEADSKTASPWKSARLMVHTVATFNSIKELNERWRSLQQLAEERSQLLGSAHEVQRFHRDADETKEWIEEKNQALNTDNYGHDLASVQALQRKHEGFERDLAALGDKVNSLGETAQRLIQSHPESAEDLKEKCTELNQAWTSLGKRADQRKAKLGDSHDLQRFLSDFRDLMSWINGIRGLVSSDELAKDVTGAEALLERHQEHRTEIDARAGTFQAFEQFGQQLLAHGHYASPEIKEKLDILDQERTDLEKAWVQRRMMLDHCLELQLFHRDCEQAENWMAAREAFLNTEDKGDSLDSVEALIKKHEDFDKAINVQEEKIAALQAFADQLIAVDHYAKGDIANRRNEVLDRWRRLKAQMIEKRSKLGESQTLQQFSRDVDEIEAWISEKLQTASDESYKDPTNIQSKHQKHQAFEAELHANADRIRGVIDMGNSLIERGACAGSEDAVKARLAALADQWQFLVQKSAEKSQKLKEANKQQNFNTGIKDFDFWLSEVEALLASEDYGKDLASVNNLLKKHQLLEADISAHEDRLKDLNSQADSLMTSSAFDTSQVKEKRDTINGRFQKIKSMATSRRAKLSESHRLHQFFRDMDDEESWIKEKKLLVSSEDYGRDLTGVQNLRKKHKRLEAELAAHEPAIQGVLDTGKKLSDDNTIGQEEIQQRLAQFVEHWKELKQLAAARGQRLEESLEYQQFVANVEEEEAWINEKMTLVASEDYGDTLAAIQGLLKKHEAFETDFTVHKDRVNDVCTNGQDLIKKNNHHEENISSKMKGLNGKVSDLEKAAAQRKAKLDENSAFLQFNWKADVVESWIGEKENSLKTDDYGRDLSSVQTLLTKQETFDAGLQAFQQEGIANITALKDQLLAAKHIQSKAIEARHASLMKRWTQLLANSATRKKKLLEAQSHFRKVEDLFLTFAKKASAFNSWFENAEEDLTDPVRCNSLEEIKALREAHDAFRSSLSSAQADFNQLAELDRQIKSFRVASNPYTWFTMEALEETWRNLQKIIKERELELQKEQRRQEENDKLRQEFAQHANAFHQWIQETRTYLLDGSCMVEESGTLESQLEATKRKHQEIRAMRSQLKKIEDLGAAMEEALILDNKYTEHSTVGLAQQWDQLDQLGMRMQHNLEQQIQARNTTGVTEEALKEFSMMFKHFDKDKSGRLNHQEFKSCLRSLGYDLPMVEEGEPDPEFEAILDTVDPNRDGHVSLQEYMAFMISRETENVKSSEEIESAFRALSSEGKPYVTKEELYQNLTREQADYCVSHMKPYVDGKGRELPTAFDYVEFTRSLFVN.

An N-acetylmethionine modification is found at methionine 1. Spectrin repeat units follow at residues 45-146, 150-251, 256-358, 361-465, 468-570, 574-676, 679-781, 785-888, and 891-961; these read RFQF…IKLL, KLVQ…QGKL, EVQR…ARLD, YRLQ…QYEQ, DLQL…AQLA, HLQQ…KLRE, QQQQ…QKLA, RLQQ…DLED, and QAQQ…QQVA. Serine 587 bears the Phosphoserine mark. Position 637 is an N6-acetyllysine (lysine 637). Residue lysine 803 is modified to N6-acetyllysine. Serine 924, serine 982, serine 999, serine 1029, serine 1031, and serine 1041 each carry phosphoserine. Residues 967-1026 enclose the SH3 domain; the sequence is TGKELVLALYDYQEKSPREVTMKKGDILTLLNSTNKDWWKVEVNDRQGFVPAAYVKKLDP. The stretch at 1096 to 1166 is one Spectrin 10 repeat; sequence LFREANELQQ…LESEGLMAEE (71 aa). Tyrosine 1176 is modified (phosphotyrosine). Phosphoserine is present on residues serine 1190, serine 1207, serine 1217, serine 1291, serine 1306, serine 1323, and serine 1338. One copy of the Spectrin 11 repeat lies at 1233 to 1336; the sequence is HEVQRFHRDA…RADQRKAKLG (104 aa). Spectrin repeat units follow at residues 1339-1441 and 1446-1549; these read HDLQ…RMML and ELQL…KLGE. Lysine 1519 carries the N6-acetyllysine modification. Phosphoserine is present on residues serine 1550, serine 1557, serine 1578, serine 1615, and serine 1647. Spectrin repeat units follow at residues 1552–1656, 1659–1762, 1764–1868, 1871–1974, 1978–2081, 2092–2194, and 2206–2310; these read TLQQ…KLKE, KQQN…KLSE, HRLH…RLEE, EYQQ…KLDE, FLQF…KLLE, LFLT…LELQ, and LRQE…NLEQ. Threonine 2020 is modified (phosphothreonine). Lysine 2052 carries the N6-acetyllysine modification. Threonine 2066 bears the Phosphothreonine mark. EF-hand domains are found at residues 2323 to 2358, 2366 to 2401, and 2404 to 2439; these read EALKEFSMMFKHFDKDKSGRLNHQEFKSCLRSLGYD, EPDPEFEAILDTVDPNRDGHVSLQEYMAFMISRETE, and KSSEEIESAFRALSSEGKPYVTKEELYQNLTREQAD. The Ca(2+) site is built by aspartate 2336, aspartate 2338, serine 2340, arginine 2342, glutamate 2347, aspartate 2379, asparagine 2381, aspartate 2383, histidine 2385, and glutamate 2390. Lysine 2421 is subject to N6-acetyllysine.

Belongs to the spectrin family. As to quaternary structure, like erythrocyte spectrin, the spectrin-like proteins are capable of forming dimers which can further associate to tetramers. Interacts (via C-terminal spectrin repeats) with TRPC4. Interacts with CALM and EMD. Interacts with isoform 1 of ACP1. Identified in a complex with ACTN4, CASK, IQGAP1, MAGI2, NPHS1 and SPTBN1. Interacts with SHANK3 (via ANK repeats). Interacts with CLN3; this interaction regulates the fodrin localization at the plasma membrane. Post-translationally, phosphorylation of Tyr-1176 decreases sensitivity to cleavage by calpain in vitro. In terms of tissue distribution, expressed in the foot process layer of podocytes in the kidney glomerulus and in tubules (at protein level).

Its subcellular location is the cytoplasm. It localises to the cytoskeleton. The protein localises to the cell cortex. In terms of biological role, fodrin, which seems to be involved in secretion, interacts with calmodulin in a calcium-dependent manner and is thus candidate for the calcium-dependent movement of the cytoskeleton at the membrane. This is Spectrin alpha chain, non-erythrocytic 1 (Sptan1) from Rattus norvegicus (Rat).